The primary structure comprises 417 residues: Tyrosine--tRNA ligase (417 aa).

Tyr-34 is an L-tyrosine binding site. The 'HIGH' region motif lies at 39-48 (PTGDSMHIGH). L-tyrosine-binding residues include Tyr-165 and Gln-169. The 'KMSKS' region signature appears at 227–231 (KFGKS). Residue Lys-230 participates in ATP binding. Residues 349–417 (ENIVLWLVDT…KKKYFLARVK (69 aa)) form the S4 RNA-binding domain.

It belongs to the class-I aminoacyl-tRNA synthetase family. TyrS type 1 subfamily. Homodimer.

Its subcellular location is the cytoplasm. It carries out the reaction tRNA(Tyr) + L-tyrosine + ATP = L-tyrosyl-tRNA(Tyr) + AMP + diphosphate + H(+). In terms of biological role, catalyzes the attachment of tyrosine to tRNA(Tyr) in a two-step reaction: tyrosine is first activated by ATP to form Tyr-AMP and then transferred to the acceptor end of tRNA(Tyr). The protein is Tyrosine--tRNA ligase of Pediococcus pentosaceus (strain ATCC 25745 / CCUG 21536 / LMG 10740 / 183-1w).